The following is a 119-amino-acid chain: uncharacterized protein (119 aa).

The disordered stretch occupies residues 67-119 (LGLKEVQKKSNEGLNEVQGVADINKQKRPANSQDSSSVEGDIQNFLEKVTGKN). Polar residues predominate over residues 95–104 (PANSQDSSSV).

This is an uncharacterized protein from Anabaena variabilis.